Reading from the N-terminus, the 323-residue chain is GILT-like protein C02D5.2 (323 aa).

The chain crosses the membrane as a helical span at residues 13–32 (LICRPILTFSSLHILTAFLI). An N-linked (GlcNAc...) asparagine glycan is attached at Asn35. Helical transmembrane passes span 37 to 59 (SYIN…HRFL) and 87 to 104 (YIYG…YRSL). Asn289 is a glycosylation site (N-linked (GlcNAc...) asparagine).

This sequence belongs to the GILT family.

Its subcellular location is the membrane. The chain is GILT-like protein C02D5.2 from Caenorhabditis elegans.